The primary structure comprises 674 residues: MPSATSTNGANGNGNGNGASASPAPGNLSANDNIRRFAAPSRPLSPLPAHALFNEKTRCFVYGLQPRAVQGMLDFDFICKRSTPSVAGIIYTFGGQFVSKMYWGTSETLLPVYQEVQKAIAKHPDVDVVVNFASSRSVYSSTMELMEHPQIKTIAIIAEGVPERRAREIAYVAKKKGITIIGPATVGGIKPGCFKIGNTGGMMDNIVASKLYRKGSVGYVSKSGGMSNELNNIISQTTDGVYEGVAIGGDRYPGTTFIDHLLRYQADPACKILVLLGEVGGVEEYKVIEAVKQGIITKPIVAWAIGTCASMFKTEVQFGHAGAFANSQLETAATKNKSMREAGFYVPDTFEDMPALLKQVYDKLVADGTIVPAPEPVVPKIPIDYSWAQELGLIRKPAAFISTISDDRGQELLYAGMPISDVFREEIGIGGVMSLLWFRRRLPDYAAKFLEMVLMLTADHGPAVSGAMNTIITTRAGKDLISSLVAGLLTIGSRFGGALDGAAEEFTKAFDKGLSPREFVDTMRKQNKLIPGIGHRVKSRNNPDLRVELVKEYVKAKFPSSKLLDYALAVETVTTSKKDNLILNVDGCIAVCFVDLLRNCGAFSTEEAEDYLSMGVLNGLFVLGRSIGLIAHYLDQKRLRTGLYRHPWDDITYLLPSLQQPGPPGTEGRVEVQI.

Residues 1–10 show a composition bias toward low complexity; the sequence is MPSATSTNGA. Positions 1–26 are disordered; sequence MPSATSTNGANGNGNGNGASASPAPG. ATP is bound by residues 261–281 and 312–338; these read LLRY…EVGG and FKTE…KNKS. Glutamate 278 is a Mg(2+) binding site. Histidine 320 functions as the Tele-phosphohistidine intermediate in the catalytic mechanism. 339 to 349 lines the CoA pocket; the sequence is MREAGFYVPDT.

The protein belongs to the succinate/malate CoA ligase alpha subunit family. As to quaternary structure, composed of two subunits.

The protein resides in the cytoplasm. It catalyses the reaction oxaloacetate + acetyl-CoA + ADP + phosphate = citrate + ATP + CoA. Functionally, catalyzes the formation of cytosolic acetyl-CoA, which is mainly used for the biosynthesis of fatty acids and sterols. The chain is ATP-citrate synthase subunit 1 (ACL1) from Sordaria macrospora (strain ATCC MYA-333 / DSM 997 / K(L3346) / K-hell).